The primary structure comprises 424 residues: Enolase (424 aa).

A (2R)-2-phosphoglycerate-binding site is contributed by glutamine 165. The active-site Proton donor is glutamate 207. 3 residues coordinate Mg(2+): aspartate 244, glutamate 283, and aspartate 310. (2R)-2-phosphoglycerate-binding residues include lysine 335, arginine 364, serine 365, and lysine 386. Residue lysine 335 is the Proton acceptor of the active site.

The protein belongs to the enolase family. It depends on Mg(2+) as a cofactor.

The protein localises to the cytoplasm. It localises to the secreted. The protein resides in the cell surface. The enzyme catalyses (2R)-2-phosphoglycerate = phosphoenolpyruvate + H2O. The protein operates within carbohydrate degradation; glycolysis; pyruvate from D-glyceraldehyde 3-phosphate: step 4/5. Its function is as follows. Catalyzes the reversible conversion of 2-phosphoglycerate (2-PG) into phosphoenolpyruvate (PEP). It is essential for the degradation of carbohydrates via glycolysis. This chain is Enolase, found in Chlamydia trachomatis serovar L2 (strain ATCC VR-902B / DSM 19102 / 434/Bu).